A 1068-amino-acid polypeptide reads, in one-letter code: Protein AF-10 (1068 aa).

The PHD-type 1 zinc-finger motif lies at isoleucine 22–glutamine 74. Residues arginine 79–valine 112 form a C2HC pre-PHD-type zinc finger. The interval alanine 106–tyrosine 190 is required for interaction with histone H3. A PHD-type 2 zinc finger spans residues lysine 135–phenylalanine 198. The disordered stretch occupies residues glycine 207–threonine 260. Serine 217 carries the post-translational modification Phosphoserine. Residues serine 223–lysine 240 show a composition bias toward basic and acidic residues. At serine 252 the chain carries Phosphoserine. Lysine 280 is covalently cross-linked (Glycyl lysine isopeptide (Lys-Gly) (interchain with G-Cter in SUMO2)). Residues glutamate 296–lysine 305 show a composition bias toward polar residues. Disordered regions lie at residues glutamate 296–serine 416 and serine 428–serine 506. Positions aspartate 306–glycine 317 are enriched in basic and acidic residues. Residues threonine 340–glycine 351 are compositionally biased toward polar residues. Positions serine 352–glutamine 372 are enriched in low complexity. Polar residues-rich tracts occupy residues tyrosine 387–threonine 396, serine 404–serine 416, and serine 428–proline 446. Serine 436 carries the post-translational modification Phosphoserine. Positions glutamate 465–glycine 483 are enriched in basic residues. Low complexity predominate over residues valine 490 to serine 506. Serine 532 carries the post-translational modification Phosphoserine. Over residues serine 583–serine 594 the composition is skewed to low complexity. 2 disordered regions span residues serine 583–serine 613 and serine 660–leucine 698. A compositionally biased stretch (polar residues) spans histidine 595 to leucine 604. Residues serine 681–proline 692 are compositionally biased toward low complexity. 3 positions are modified to phosphoserine: serine 686, serine 688, and serine 691. The segment at leucine 752–leucine 780 is leucine-zipper. 2 disordered regions span residues alanine 786–valine 869 and proline 1040–serine 1068. A compositionally biased stretch (polar residues) spans isoleucine 787–serine 816. 2 stretches are compositionally biased toward low complexity: residues leucine 836 to serine 850 and glutamine 857 to valine 869. Over residues proline 1040–threonine 1054 the composition is skewed to polar residues.

In terms of assembly, self-associates. Interacts with FSTL3; the interaction enhances MLLT10 in vitro transcriptional activity and self-association. Interacts with YEATS4. Interacts with SS18. Interacts with DOT1L. Interacts with histone H3; interaction is necessary for MLLT10 binding to nucleosomes; interaction is inhibited by histone H3 'Lys-27' methylations (H3K27me1, H3K27me2 and H3K27me3) amd acetylation; interaction stabilizes association of MLLT10 at chromatin; interaction is essential for histone H3 'Lys-79' dimethylation (H3K79me2).

It is found in the nucleus. In terms of biological role, probably involved in transcriptional regulation. Binds to cruciform DNA. In cells, binding to unmodified histone H3 regulates DOT1L functions including histone H3 'Lys-79' dimethylation (H3K79me2) and gene activation. In Mus musculus (Mouse), this protein is Protein AF-10.